The primary structure comprises 235 residues: Secretory carrier-associated membrane protein 5B (235 aa).

Topologically, residues 1-39 (MSDKPNNFPPLPRFIPLKPCFYQDFDTDIPDVHRTTAKR) are cytoplasmic. A helical transmembrane segment spans residues 40–60 (LYYLWMLNSITLGVNLIGCLA). Residues 61–67 (WLIGGGG) lie on the Extracellular side of the membrane. Residues 68–88 (ATNFGLAFLWLILFTPCSYVC) traverse the membrane as a helical segment. Residues 89-102 (WFRPIYKAFKTDSS) lie on the Cytoplasmic side of the membrane. A helical transmembrane segment spans residues 103-125 (FNFMAFFFTFTGQLVISIIQAVG). The Extracellular segment spans residues 126–148 (IPGWGVCGWIASISFFGTNVGSA). A helical membrane pass occupies residues 149–169 (VVMLIPTIMFTAVAVLSFVAL). Topologically, residues 170 to 235 (TKVHRFYRGA…TPNYGYSNQM (66 aa)) are cytoplasmic.

It belongs to the SCAMP family. SCAMP5 subfamily.

The protein resides in the cell membrane. It is found in the golgi apparatus membrane. The protein localises to the golgi apparatus. Its subcellular location is the trans-Golgi network membrane. It localises to the recycling endosome membrane. The protein resides in the cytoplasmic vesicle. It is found in the secretory vesicle. The protein localises to the synaptic vesicle membrane. In terms of biological role, required for the calcium-dependent exocytosis of signal sequence-containing cytokines. Probably acts in cooperation with the SNARE machinery. This Xenopus laevis (African clawed frog) protein is Secretory carrier-associated membrane protein 5B (scamp5-b).